The primary structure comprises 366 residues: Polyprenyl transferase AOL_s00215g276 (366 aa).

The interval methionine 1–serine 22 is disordered. Helical transmembrane passes span leucine 53–alanine 73, phenylalanine 85–threonine 105, isoleucine 137–phenylalanine 157, alanine 160–valine 180, leucine 185–asparagine 205, alanine 212–threonine 232, and histidine 253–alanine 273. N-linked (GlcNAc...) asparagine glycosylation occurs at asparagine 277. 2 consecutive transmembrane segments (helical) span residues leucine 281–leucine 301 and valine 312–tryptophan 332. Asparagine 352 is a glycosylation site (N-linked (GlcNAc...) asparagine).

The protein belongs to the UbiA prenyltransferase family. The cofactor is Mg(2+).

The protein localises to the membrane. It functions in the pathway secondary metabolite biosynthesis; terpenoid biosynthesis. In terms of biological role, polyprenyl transferase; part of the gene cluster that mediates the biosynthesis of sesquiterpenyl epoxy-cyclohexenoids (SECs) such as anthrobotrisins and arthrosporols, metabolites that possess a novel hybrid carbon skeleton consisting of a polyketide-derived epoxycyclohexenol combined with a terpenoid-derived monocyclic sesquiterpenol substructure (PKS-PTS hybrid). The SEC pathway plays an important role for fungal soil colonization via decreasing fungal nematode-capturing ability. Within the pathway, the polyprenyl transferase catalyzes the farnesylation of toluquinol to yield farnesyl hydroquinone, the first hybrid precursor for biosynthesis of SECs, and farnesyl quinone (34) might be the key precursor for the epoxy ring formation. The pathway begins with the biosynthesis of 6-methylsalicylic acid (6-MSA), the first precursor of the polyketide-derived epoxycyclohexenol in arthrosporols, by the polyketide synthase (PKS) AOL_s00215g283 via condensation of 1 acetate and 3 malonate units. The 6-methylsalicylic acid decarboxylase AOL_s00215g281 then catalyzes the decarboxylation of 6-methylsalicylic acid to yield m-cresol. The cytochrome P450 monooxygenase AOL_s00215g282 further oxidizes m-cresol to yield toluquinol. With the assistance of the oxidoreductase AOL_s00215g277, the polyprenyl transferase AOL_s00215g276 catalyzes the farnesylation of toluquinol to produce farnesyl hydroquinone, the hybrid precursor for biosynthesis of SECs. Farnesyl hydroquinone undergoes epoxidation and then subsequent dehydrogenation to form farnesyl epoxy-quinone, the first and simplest SEC. The cytochrome P450 monooxygenase AOL_s00215g278 and the FAD-dependent monooxygenase AOL_s00215g279 might be involved in the oxygenation of the phenol moiety, most likely in the epoxy formation. The cytochrome P450 monooxygenases AOL_s00215g274 and AOL_s00215g280 are involved in specific regional ketone reductions at respectively C-4 and C-1 of farnesyl epoxy-quinone PubMed:33823587. In Arthrobotrys oligospora (strain ATCC 24927 / CBS 115.81 / DSM 1491) (Nematode-trapping fungus), this protein is Polyprenyl transferase AOL_s00215g276.